Here is a 211-residue protein sequence, read N- to C-terminus: N-(5'-phosphoribosyl)anthranilate isomerase (211 aa).

It belongs to the TrpF family.

The enzyme catalyses N-(5-phospho-beta-D-ribosyl)anthranilate = 1-(2-carboxyphenylamino)-1-deoxy-D-ribulose 5-phosphate. It participates in amino-acid biosynthesis; L-tryptophan biosynthesis; L-tryptophan from chorismate: step 3/5. This chain is N-(5'-phosphoribosyl)anthranilate isomerase, found in Zymomonas mobilis subsp. pomaceae (strain ATCC 29192 / DSM 22645 / JCM 10191 / CCUG 17912 / NBRC 13757 / NCIMB 11200 / NRRL B-4491 / Barker I).